The following is a 959-amino-acid chain: Oxysterol-binding protein-related protein 6 (959 aa).

Positions 1 to 60 are disordered; that stretch reads MSSDEKGISPAHKTSTPTHRSASSSTSSQRESRQSIHVLERTASSSTEPSVSRQLLEPEP. An N-acetylserine modification is found at S2. The span at 14 to 29 shows a compositional bias: low complexity; that stretch reads TSTPTHRSASSSTSSQ. A compositionally biased stretch (basic and acidic residues) spans 30-40; it reads RESRQSIHVLE. Phosphoserine is present on S35. Polar residues predominate over residues 42–53; the sequence is TASSSTEPSVSR. One can recognise a PH domain in the interval 86–181; it reads PDRHEGFMLK…WVSKLRHHRL (96 aa). A phosphoserine mark is found at S190 and S290.

This sequence belongs to the OSBP family. In terms of assembly, homodimer. Interacts with OSBPL3. Expressed in skin, respiratory epithelium, small intestine epithelium, pancreas, striated muscle, brain, spinal ganglia, and nervous plexus of the intestine (at protein level). In the brain, specifically in the cerebellum, it is expressed in Purkinje and granule cells. Expressed in hepatocytes and macrophages.

It localises to the nucleus envelope. Its subcellular location is the cytoplasm. The protein localises to the cytosol. The protein resides in the endoplasmic reticulum membrane. It is found in the cell membrane. It localises to the endosome membrane. Regulates cellular transport and efflux of cholesterol. Plays a role in phosphatidylinositol-4-phophate (PI4P) turnover at the neuronal membrane. Binds via its PH domain PI4P, phosphatidylinositol-4,5-diphosphate, phosphatidylinositol-3,4,5-triphosphate, and phosphatidic acid. Weakly binds 25-hydroxycholesterol. The protein is Oxysterol-binding protein-related protein 6 (Osbpl6) of Mus musculus (Mouse).